The chain runs to 400 residues: Signal recognition particle receptor FtsY (400 aa).

2 disordered regions span residues 12–37 (TKKT…QEEQ) and 51–86 (NKIK…KDKK). The segment covering 51–72 (NKIKKTKTSETKKQEKPIETLK) has biased composition (basic and acidic residues). Residues 192-199 (GVNGTGKT), 278-282 (DTAGR), and 342-345 (TKMD) each bind GTP.

The protein belongs to the GTP-binding SRP family. FtsY subfamily. Part of the signal recognition particle protein translocation system, which is composed of SRP and FtsY.

The protein resides in the cell membrane. Its subcellular location is the cytoplasm. It catalyses the reaction GTP + H2O = GDP + phosphate + H(+). Functionally, involved in targeting and insertion of nascent membrane proteins into the cytoplasmic membrane. Acts as a receptor for the complex formed by the signal recognition particle (SRP) and the ribosome-nascent chain (RNC). The chain is Signal recognition particle receptor FtsY from Mycoplasma mycoides subsp. mycoides SC (strain CCUG 32753 / NCTC 10114 / PG1).